A 245-amino-acid chain; its full sequence is Acetylglutamate kinase (245 aa).

Substrate-binding positions include 41–42, Arg63, and Asn156; that span reads GG.

Belongs to the acetylglutamate kinase family. ArgB subfamily.

It is found in the cytoplasm. The enzyme catalyses N-acetyl-L-glutamate + ATP = N-acetyl-L-glutamyl 5-phosphate + ADP. It functions in the pathway amino-acid biosynthesis; L-arginine biosynthesis; N(2)-acetyl-L-ornithine from L-glutamate: step 2/4. In terms of biological role, catalyzes the ATP-dependent phosphorylation of N-acetyl-L-glutamate. In Leuconostoc citreum (strain KM20), this protein is Acetylglutamate kinase.